The primary structure comprises 219 residues: PKHD-type hydroxylase AM1_3707 (219 aa).

Residues 78-172 form the Fe2OG dioxygenase domain; the sequence is SIHTLLFSRY…RLVAVGWVQS (95 aa). His96, Asp98, and His153 together coordinate Fe cation. Arg163 is a 2-oxoglutarate binding site.

Fe(2+) serves as cofactor. The cofactor is L-ascorbate.

The sequence is that of PKHD-type hydroxylase AM1_3707 from Acaryochloris marina (strain MBIC 11017).